The sequence spans 301 residues: Pantothenate synthetase (301 aa).

30–37 (MGNLHEGH) is an ATP binding site. The active-site Proton donor is H37. Residue Q61 participates in (R)-pantoate binding. A beta-alanine-binding site is contributed by Q61. 149–152 (GEKD) contributes to the ATP binding site. A (R)-pantoate-binding site is contributed by Q155. ATP-binding positions include V178 and 186 to 189 (MSSR).

This sequence belongs to the pantothenate synthetase family. In terms of assembly, homodimer.

It is found in the cytoplasm. The catalysed reaction is (R)-pantoate + beta-alanine + ATP = (R)-pantothenate + AMP + diphosphate + H(+). The protein operates within cofactor biosynthesis; (R)-pantothenate biosynthesis; (R)-pantothenate from (R)-pantoate and beta-alanine: step 1/1. Functionally, catalyzes the condensation of pantoate with beta-alanine in an ATP-dependent reaction via a pantoyl-adenylate intermediate. This is Pantothenate synthetase from Vibrio vulnificus (strain YJ016).